A 205-amino-acid polypeptide reads, in one-letter code: tRNA 2-(methylsulfanyl)-N(6)-isopentenyladenosine(37) hydroxylase (205 aa).

Fe cation-binding residues include Glu38, Glu69, His72, Glu122, Glu151, and His154.

This sequence belongs to the MiaE family. In terms of assembly, homodimer. Fe cation serves as cofactor.

The enzyme catalyses 2-methylsulfanyl-N(6)-dimethylallyladenosine(37) in tRNA + AH2 + O2 = N(6)-[(2E)-4-hydroxy-3-methylbut-2-en-1-yl]-2-(methylsulfanyl)adenosine(37) in tRNA + A + H2O. It participates in tRNA modification; 2-methylthio-N-6-(cis-hydroxy)isopentenyl adenosine-tRNA biosynthesis. Its function is as follows. Involved in specific tRNA modification. Catalyzes the oxygen-dependent hydroxylation of 2-methylthio-N-6-isopentenyl adenosine (ms2i6A) to produce 2-methylthio-N-6-(cis-hydroxy)isopentenyl adenosine (ms2io6A) at position 37 in tRNAs. This Pseudomonas putida (strain ATCC 47054 / DSM 6125 / CFBP 8728 / NCIMB 11950 / KT2440) protein is tRNA 2-(methylsulfanyl)-N(6)-isopentenyladenosine(37) hydroxylase.